A 310-amino-acid chain; its full sequence is Aspartate carbamoyltransferase catalytic subunit 3 (310 aa).

2 residues coordinate carbamoyl phosphate: Arg-55 and Thr-56. Lys-85 serves as a coordination point for L-aspartate. Residues Arg-106, His-134, and Gln-137 each coordinate carbamoyl phosphate. Positions 167 and 228 each coordinate L-aspartate. Leu-266 and Pro-267 together coordinate carbamoyl phosphate.

It belongs to the aspartate/ornithine carbamoyltransferase superfamily. ATCase family. As to quaternary structure, heterododecamer (2C3:3R2) of six catalytic PyrB chains organized as two trimers (C3), and six regulatory PyrI chains organized as three dimers (R2).

The enzyme catalyses carbamoyl phosphate + L-aspartate = N-carbamoyl-L-aspartate + phosphate + H(+). Its pathway is pyrimidine metabolism; UMP biosynthesis via de novo pathway; (S)-dihydroorotate from bicarbonate: step 2/3. In terms of biological role, catalyzes the condensation of carbamoyl phosphate and aspartate to form carbamoyl aspartate and inorganic phosphate, the committed step in the de novo pyrimidine nucleotide biosynthesis pathway. The protein is Aspartate carbamoyltransferase catalytic subunit 3 of Shewanella halifaxensis (strain HAW-EB4).